A 107-amino-acid chain; its full sequence is Small ribosomal subunit protein bS18 (107 aa).

This sequence belongs to the bacterial ribosomal protein bS18 family. In terms of assembly, part of the 30S ribosomal subunit. Forms a tight heterodimer with protein bS6.

Functionally, binds as a heterodimer with protein bS6 to the central domain of the 16S rRNA, where it helps stabilize the platform of the 30S subunit. This chain is Small ribosomal subunit protein bS18, found in Mycoplasmopsis agalactiae (strain NCTC 10123 / CIP 59.7 / PG2) (Mycoplasma agalactiae).